Consider the following 548-residue polypeptide: Transcriptional adapter ADA2a (548 aa).

The disordered stretch occupies residues 1–30 (MGRSKLASRPAEEDLNPGKSKRKKISLGPE). The ZZ-type zinc-finger motif lies at 48-104 (PGLYCCNYCDKDLSGLVRFKCAVCMDFDLCVECFSVGVELNRHKNSHPYRVMDNLSF). Positions 53, 56, 68, 71, 77, 80, 90, and 94 each coordinate Zn(2+). Positions 106–158 (LVTSDWNADEEILLLEAIATYGFGNWKEVADHVGSKTTTECIKHFNSAYMQSP) constitute an SANT domain. K257 is modified (N6-acetyllysine; by GCN5). Residues 365–386 (QSKEEHKELIKKVIEEHQILRR) adopt a coiled-coil conformation. The region spanning 461-548 (PRIYSGLDTW…LVHKGIGDST (88 aa)) is the SWIRM domain.

In terms of assembly, interacts in vitro with the HAT domain of GCN5 and with the DNA-binding domain of the transcriptional activator DREB1B/CBF1. Acetylated in vitro by GCN5, but acetylation is not essential for biological activity. Expressed in roots and leaves.

The protein resides in the nucleus. Functionally, required for the function of some acidic activation domains, which activate transcription from a distant site. The exact mechanism of action is not yet known. ADA2 stimulates the acetyltransferase activity of GCN5 on free histones or nucleosomes, probably by opening up the promoter region. The sequence is that of Transcriptional adapter ADA2a (ADA2A) from Arabidopsis thaliana (Mouse-ear cress).